A 551-amino-acid polypeptide reads, in one-letter code: (6-4)DNA photolyase (551 aa).

The Photolyase/cryptochrome alpha/beta domain occupies 13–157 (AAAMVWFRKG…DVFSPVSHTL (145 aa)). Residue glutamate 254 participates in phosphate binding. FAD is bound by residues lysine 255, 268-272 (TTVLS), 309-313 (QLLWR), 372-375 (WMHH), arginine 378, 407-409 (DSD), and asparagine 413. Tryptophan 312 serves as a coordination point for DNA. The segment at 374-379 (HHLARH) is interaction with DNA. Tryptophan 419 contacts DNA. Residues 508–551 (YASNRLDDDKPDKGKSSNSSRRKLSAGSQVTPNSSKTKQLKRSS) are disordered. Residues 512-522 (RLDDDKPDKGK) are compositionally biased toward basic and acidic residues. Polar residues predominate over residues 533-544 (AGSQVTPNSSKT).

The protein belongs to the DNA photolyase class-1 family. FAD is required as a cofactor.

It carries out the reaction (6-4) photoproduct (in DNA) = 2 pyrimidine residues (in DNA).. In terms of biological role, involved in repair of UV radiation-induced DNA damage. Catalyzes the photoreactivation of pyrimidine [6-4] pyrimidone photoproduct (6-4 products). The polypeptide is (6-4)DNA photolyase (UVR3) (Oryza sativa subsp. japonica (Rice)).